The chain runs to 201 residues: Ciliary microtubule inner protein 2C (201 aa).

It belongs to the CIMIP2 family. As to quaternary structure, microtubule inner protein component of sperm flagellar doublet microtubules.

It is found in the cytoplasm. Its subcellular location is the cytoskeleton. The protein resides in the cilium axoneme. The protein localises to the flagellum axoneme. Microtubule inner protein (MIP) part of the dynein-decorated doublet microtubules (DMTs) in cilia axoneme, which is required for motile cilia beating. Binds to the intra-tubulin interfaces. This chain is Ciliary microtubule inner protein 2C (CIMIP2C), found in Bos taurus (Bovine).